The primary structure comprises 1364 residues: Kinectin (1364 aa).

The Cytoplasmic portion of the chain corresponds to 1–6 (MEFYES). The chain crosses the membrane as a helical; Signal-anchor for type II membrane protein span at residues 7–29 (TYFIILIPSVVITVIFLFFWLFM). Residues 30 to 1364 (KETLYDEVLA…KGREHYQLVE (1335 aa)) are Lumenal-facing. Basic and acidic residues-rich tracts occupy residues 46–56 (KFPPTKSDKKK), 73–86 (HESD…DFKL), 121–135 (QKAA…ESEG), and 170–179 (QKNDDQDTKT). The segment at 46–207 (KFPPTKSDKK…VKQENVSGKK (162 aa)) is disordered. 10 N-linked (GlcNAc...) asparagine glycosylation sites follow: Asn202, Asn267, Asn623, Asn638, Asn704, Asn775, Asn976, Asn1061, Asn1088, and Asn1094. A coiled-coil region spans residues 315 to 1085 (KASKAESAAA…VETRELLQKL (771 aa)). Residues 1116–1306 (SGSEDIKVME…ASLEREIGKV (191 aa)) adopt a coiled-coil conformation.

Belongs to the kinectin family. Parallel homodimers formed between the membrane-bound and the cytosolic form, and also between 2 cytosolic forms. Post-translationally, both the membrane and cytoplasmic forms seem to be myristoylated.

It localises to the endoplasmic reticulum membrane. Its function is as follows. Receptor for kinesin thus involved in kinesin-driven vesicle motility. The protein is Kinectin (KTN1) of Gallus gallus (Chicken).